A 510-amino-acid chain; its full sequence is uncharacterized protein (510 aa).

A run of 12 helical transmembrane segments spans residues 17-37 (LKLG…LVVL), 56-76 (LIIH…ASVW), 111-131 (VLYI…ISPL), 148-168 (IVFI…AINI), 180-200 (LVNV…VCFG), 223-243 (LLFW…LIFI), 261-281 (FYLF…FGHI), 300-320 (YLGG…LVLM), 355-375 (IIKT…LIAI), 382-402 (LVIP…CMGY), 434-454 (AIYL…FSGI), and 472-492 (LLMG…LMFV).

It to A.aeolicus AQ_155.

It localises to the cell membrane. This is an uncharacterized protein from Rickettsia prowazekii (strain Madrid E).